We begin with the raw amino-acid sequence, 351 residues long: MNELKNDRLLRALLREPVDTTPVWIMRQAGRYLPEYRATRARAGSFMDLCQSPEMACEVTLQPLERFPLDAAILFSDILTIPDAMGLGLYFSEGEGPRFERPVQDAAAIRALGVPDPETELRYVTDAVRLIRRELDGRVPLIGFSGSPWTLATYMVEGGSSKEFARIKGMLYDDPSTLHHLLGVLAEAVTVYLNAQIAAGAQAVMVFDTWGGSLTPEGYREFSLAYMQRIVAGLTREHEGRRVPVTLFTKGGGAWLEVMAETGCDALGLDWTVNIGEARRRVGDRVALQGNLDPAVLYASAERVRAAARKVVEDFGPGSGHVFNLGHGIHPGIDPEKVAALVDEVHKAGMK.

Substrate contacts are provided by residues 27–31, Asp77, Tyr154, Thr209, and His327; that span reads RQAGR.

The protein belongs to the uroporphyrinogen decarboxylase family. As to quaternary structure, homodimer.

It is found in the cytoplasm. The enzyme catalyses uroporphyrinogen III + 4 H(+) = coproporphyrinogen III + 4 CO2. The protein operates within porphyrin-containing compound metabolism; protoporphyrin-IX biosynthesis; coproporphyrinogen-III from 5-aminolevulinate: step 4/4. Its function is as follows. Catalyzes the decarboxylation of four acetate groups of uroporphyrinogen-III to yield coproporphyrinogen-III. The chain is Uroporphyrinogen decarboxylase from Thioalkalivibrio sulfidiphilus (strain HL-EbGR7).